The chain runs to 248 residues: NAD-dependent protein deacylase 2 (248 aa).

The 248-residue stretch at 1-248 folds into the Deacetylase sirtuin-type domain; the sequence is MLQAASALRH…HVMAELISHI (248 aa). NAD(+)-binding positions include 19-38 and 102-105; these read GAGLSADSGLPTYRGVGGLY and QNVD. The Proton acceptor role is filled by histidine 122. The Zn(2+) site is built by cysteine 130, cysteine 133, cysteine 152, and cysteine 155. Residues 193–195, 219–221, and alanine 237 contribute to the NAD(+) site; these read GTT and NPQ.

Belongs to the sirtuin family. Class III subfamily. It depends on Zn(2+) as a cofactor.

The protein localises to the cytoplasm. The enzyme catalyses N(6)-acetyl-L-lysyl-[protein] + NAD(+) + H2O = 2''-O-acetyl-ADP-D-ribose + nicotinamide + L-lysyl-[protein]. NAD-dependent protein deacetylase which modulates the activities of several proteins which are inactive in their acetylated form. This is NAD-dependent protein deacylase 2 (cobB2) from Pseudomonas syringae pv. tomato (strain ATCC BAA-871 / DC3000).